We begin with the raw amino-acid sequence, 107 residues long: RecQ-mediated genome instability protein 2 homolog (107 aa).

The protein belongs to the RMI2 family. In terms of assembly, component of the RMI complex, containing at least top-3, rmh-1 and rmh-2. Component of the BTR double Holliday Junction dissolution complex composed of at least him-6, top-3, rmh-1 and rmif-2, which is involved in double strand break repair in the germline. Interacts with rmh-1; the interaction is direct and is required for mutual stability and localization at nuclear foci. As to expression, expressed in the germline.

The protein localises to the nucleus. In terms of biological role, essential component of the RMI complex, a complex that plays an important role in the processing of homologous recombination intermediates. Component of the BTR double Holliday Junction dissolution complex, which is involved in homologous recombination during meiotic double strand break in the germline. Plays a role in double strand break repair by positively regulating the accumulation of rad-51 at double strand breaks. Stabilizes and positively regulates the localization of the BTR double Holliday Junction dissolution complex components rmh-1, him-6 and top-3 at nuclear foci during meiotic recombination. Positively regulates meiotic recombination, chiasma formation, and chromosome segregation in meiosis. Positively regulates DNA crossover formation and positioning on chromosome arms (away from the chromosome center) during homologous recombination. This chain is RecQ-mediated genome instability protein 2 homolog, found in Caenorhabditis elegans.